Here is a 297-residue protein sequence, read N- to C-terminus: Myoblast determination protein 1 homolog (297 aa).

Positions 52–76 are disordered; the sequence is KPEEHPHHHGHHHGHPHEEEHVRAP. A bHLH domain is found at 101–152; it reads DRRKAATMRERRRLSKVNEAFETLKRCTSTNPNQRLPKVEILRNAIRYIESL. 2 disordered regions span residues 171 to 221 and 243 to 297; these read SGES…GKSS and CPIL…YQVL. 2 stretches are compositionally biased toward polar residues: residues 174–184 and 258–297; these read SDASSPRSNCS and CSPQEGASLNDSGAQIPSPTNCTPLPQDSSSSSNPIYQVL.

As to quaternary structure, efficient DNA binding requires dimerization with another bHLH protein. Seems to form active heterodimers with ITF-2.

It localises to the nucleus. In terms of biological role, acts as a transcriptional activator that promotes transcription of muscle-specific target genes and plays a role in muscle differentiation. Induces fibroblasts to differentiate into myoblasts. Interacts with and is inhibited by the twist protein. This interaction probably involves the basic domains of both proteins. This Coturnix japonica (Japanese quail) protein is Myoblast determination protein 1 homolog (MYOD1).